The chain runs to 95 residues: Co-chaperonin GroES (95 aa).

This sequence belongs to the GroES chaperonin family. As to quaternary structure, heptamer of 7 subunits arranged in a ring. Interacts with the chaperonin GroEL.

The protein resides in the cytoplasm. Together with the chaperonin GroEL, plays an essential role in assisting protein folding. The GroEL-GroES system forms a nano-cage that allows encapsulation of the non-native substrate proteins and provides a physical environment optimized to promote and accelerate protein folding. GroES binds to the apical surface of the GroEL ring, thereby capping the opening of the GroEL channel. The chain is Co-chaperonin GroES from Syntrophotalea carbinolica (strain DSM 2380 / NBRC 103641 / GraBd1) (Pelobacter carbinolicus).